The sequence spans 716 residues: DEAD-box ATP-dependent RNA helicase 31 (716 aa).

Residues 99-188 form a disordered region; it reads GILKSDDEDE…LRLEDESSDE (90 aa). The span at 110–121 shows a compositional bias: basic and acidic residues; it reads DRSRGRNQEKRG. A compositionally biased stretch (polar residues) spans 144–153; it reads SRIQGKSSEA. Residues 155 to 188 are compositionally biased toward basic and acidic residues; the sequence is FRGRKETSFSRDREDEKGLRKREDLRLEDESSDE. The Q motif signature appears at 248 to 276; it reads TRFDHYPLSPLSLKAIKDAGYETMTVVQE. Residues 279–462 enclose the Helicase ATP-binding domain; that stretch reads LPIILKGKDV…LVALRRDHEF (184 aa). ATP is bound at residue 292-299; sequence AKTGTGKT. The short motif at 410 to 413 is the DEAD box element; it reads DEAD. The 147-residue stretch at 497 to 643 folds into the Helicase C-terminal domain; the sequence is LREHIMGNVD…IDPETVKKVQ (147 aa).

The protein belongs to the DEAD box helicase family.

The enzyme catalyses ATP + H2O = ADP + phosphate + H(+). This chain is DEAD-box ATP-dependent RNA helicase 31 (RH31), found in Arabidopsis thaliana (Mouse-ear cress).